We begin with the raw amino-acid sequence, 299 residues long: Hemolysin C homolog (299 aa).

CBS domains lie at 80 to 142 (MVPR…NGRL) and 145 to 202 (LIRK…IDDE).

It belongs to the UPF0053 family. Hemolysin C subfamily.

This is Hemolysin C homolog (tlyC) from Rickettsia massiliae (strain Mtu5).